The primary structure comprises 792 residues: Molybdenum cofactor sulfurase (792 aa).

K246 carries the post-translational modification N6-(pyridoxal phosphate)lysine. The active site involves C414. Positions L646–T792 constitute an MOSC domain. A Phosphoserine modification is found at S748.

The protein belongs to the class-V pyridoxal-phosphate-dependent aminotransferase family. MOCOS subfamily. Requires pyridoxal 5'-phosphate as cofactor.

It catalyses the reaction Mo-molybdopterin + L-cysteine + AH2 = thio-Mo-molybdopterin + L-alanine + A + H2O. The protein operates within cofactor biosynthesis; molybdopterin biosynthesis. Functionally, sulfurates the molybdenum cofactor. Sulfation of molybdenum is essential for xanthine dehydrogenase (XDH) and aldehyde oxidase (ADO) enzymes in which molybdenum cofactor is liganded by 1 oxygen and 1 sulfur atom in active form. This is Molybdenum cofactor sulfurase from Drosophila pseudoobscura pseudoobscura (Fruit fly).